We begin with the raw amino-acid sequence, 500 residues long: Glutamate--tRNA ligase (500 aa).

The 'HIGH' region motif lies at 13 to 23 (PSPTGTPHVGM). The 'KMSKS' region motif lies at 258–262 (KLSKR). Lysine 261 serves as a coordination point for ATP.

The protein belongs to the class-I aminoacyl-tRNA synthetase family. Glutamate--tRNA ligase type 1 subfamily. As to quaternary structure, monomer.

Its subcellular location is the cytoplasm. The enzyme catalyses tRNA(Glu) + L-glutamate + ATP = L-glutamyl-tRNA(Glu) + AMP + diphosphate. Its function is as follows. Catalyzes the attachment of glutamate to tRNA(Glu) in a two-step reaction: glutamate is first activated by ATP to form Glu-AMP and then transferred to the acceptor end of tRNA(Glu). The sequence is that of Glutamate--tRNA ligase from Corynebacterium jeikeium (strain K411).